The chain runs to 138 residues: Putative pre-16S rRNA nuclease (138 aa).

Belongs to the YqgF nuclease family.

Its subcellular location is the cytoplasm. In terms of biological role, could be a nuclease involved in processing of the 5'-end of pre-16S rRNA. This Escherichia coli O45:K1 (strain S88 / ExPEC) protein is Putative pre-16S rRNA nuclease.